A 387-amino-acid polypeptide reads, in one-letter code: Phosphoglycerate kinase (387 aa).

Residues Asp21–Asn23, Arg36, His59–Arg62, Arg113, and Arg146 contribute to the substrate site. Residues Lys197, Glu314, and Gly340–Thr343 contribute to the ATP site.

It belongs to the phosphoglycerate kinase family. In terms of assembly, monomer.

It is found in the cytoplasm. The enzyme catalyses (2R)-3-phosphoglycerate + ATP = (2R)-3-phospho-glyceroyl phosphate + ADP. The protein operates within carbohydrate degradation; glycolysis; pyruvate from D-glyceraldehyde 3-phosphate: step 2/5. The protein is Phosphoglycerate kinase of Aliivibrio fischeri (strain ATCC 700601 / ES114) (Vibrio fischeri).